The sequence spans 177 residues: MSTQIPMDPPKFLCMPARPLVVGLAVFGAIRSFVQFWMSSGFGMAGTHFCVLLLDLLLLFGAYKNDVFALKWSQRVTFACVLIAIIRFMIYPVVFASYMASGLSRNFTGIDSEEIEILGNVTTPEQNFVFGMISGFTLEFATALSIGVESLKYLLVHRLWEYAKATEASSSSRYVIP.

3 consecutive transmembrane segments (helical) span residues 19–39, 42–62, and 76–96; these read PLVV…FWMS, FGMA…LFGA, and VTFA…VVFA.

The protein resides in the membrane. This is Glia associated membrane protein glam-1 from Caenorhabditis elegans.